The chain runs to 107 residues: Toxin MT2730 (107 aa).

Residues 1–42 are disordered; sequence MTHKRTKRQPAIAAGLNAPRRNRVGRQHGWPADVPSAEQRRA.

Functionally, toxic component of a type II toxin-antitoxin (TA) system. Its toxic effect is neutralized by coexpression with cognate antitoxin MT2731. The protein is Toxin MT2730 of Mycobacterium tuberculosis (strain CDC 1551 / Oshkosh).